Here is a 197-residue protein sequence, read N- to C-terminus: NADH-quinone oxidoreductase subunit B (197 aa).

Positions 76, 77, 141, and 171 each coordinate [4Fe-4S] cluster.

Belongs to the complex I 20 kDa subunit family. NDH-1 is composed of 14 different subunits. Subunits NuoB, C, D, E, F, and G constitute the peripheral sector of the complex. [4Fe-4S] cluster serves as cofactor.

It is found in the cell inner membrane. It carries out the reaction a quinone + NADH + 5 H(+)(in) = a quinol + NAD(+) + 4 H(+)(out). Functionally, NDH-1 shuttles electrons from NADH, via FMN and iron-sulfur (Fe-S) centers, to quinones in the respiratory chain. The immediate electron acceptor for the enzyme in this species is believed to be ubiquinone. Couples the redox reaction to proton translocation (for every two electrons transferred, four hydrogen ions are translocated across the cytoplasmic membrane), and thus conserves the redox energy in a proton gradient. The sequence is that of NADH-quinone oxidoreductase subunit B from Methylobacterium nodulans (strain LMG 21967 / CNCM I-2342 / ORS 2060).